The sequence spans 479 residues: Monodictyphenone cluster transcriptional coactivator mdpA (479 aa).

The HTH iclR-type domain occupies 77 to 147 (LAVQNQLLAC…DPGQVAHSAL (71 aa)). A DNA-binding region (H-T-H motif) is located at residues 107–126 (IKDVAELAGVPETHLSRIIR). 2 disordered regions span residues 281-305 (GPTA…HKHD) and 314-333 (TAST…TTNS). Over residues 289 to 298 (HPNPIRPPTP) the composition is skewed to pro residues. Residues 314-323 (TASTTPASSH) are compositionally biased toward low complexity.

The protein resides in the nucleus. Functionally, transcriptional coactivator; part of the gene cluster that mediates the biosynthesis of monodictyphenone, a prenyl xanthone derivative. With mdpE, coregulates the production of monodictyphenone. In Emericella nidulans (strain FGSC A4 / ATCC 38163 / CBS 112.46 / NRRL 194 / M139) (Aspergillus nidulans), this protein is Monodictyphenone cluster transcriptional coactivator mdpA.